The primary structure comprises 458 residues: Argininosuccinate lyase (458 aa).

The protein belongs to the lyase 1 family. Argininosuccinate lyase subfamily.

The protein localises to the cytoplasm. It carries out the reaction 2-(N(omega)-L-arginino)succinate = fumarate + L-arginine. The protein operates within amino-acid biosynthesis; L-arginine biosynthesis; L-arginine from L-ornithine and carbamoyl phosphate: step 3/3. This Geobacter metallireducens (strain ATCC 53774 / DSM 7210 / GS-15) protein is Argininosuccinate lyase.